The primary structure comprises 249 residues: 1-(5-phosphoribosyl)-5-[(5-phosphoribosylamino)methylideneamino] imidazole-4-carboxamide isomerase (249 aa).

Aspartate 11 (proton acceptor) is an active-site residue. Catalysis depends on aspartate 133, which acts as the Proton donor.

This sequence belongs to the HisA/HisF family.

The protein resides in the cytoplasm. It carries out the reaction 1-(5-phospho-beta-D-ribosyl)-5-[(5-phospho-beta-D-ribosylamino)methylideneamino]imidazole-4-carboxamide = 5-[(5-phospho-1-deoxy-D-ribulos-1-ylimino)methylamino]-1-(5-phospho-beta-D-ribosyl)imidazole-4-carboxamide. It functions in the pathway amino-acid biosynthesis; L-histidine biosynthesis; L-histidine from 5-phospho-alpha-D-ribose 1-diphosphate: step 4/9. The chain is 1-(5-phosphoribosyl)-5-[(5-phosphoribosylamino)methylideneamino] imidazole-4-carboxamide isomerase from Actinobacillus succinogenes (strain ATCC 55618 / DSM 22257 / CCUG 43843 / 130Z).